A 603-amino-acid polypeptide reads, in one-letter code: Keratin, type II cuticular Hb4 (603 aa).

The segment at 1-173 is head; sequence MSCRSYRVSS…PNAQRVKRDE (173 aa). Residues 173–484 enclose the IF rod domain; it reads EKEQIKTLNN…RLLEGEEIRI (312 aa). A coil 1A region spans residues 174-208; the sequence is KEQIKTLNNKFASFIDKVRFLEQQNKLLETKWSFL. The linker 1 stretch occupies residues 209–218; the sequence is QEQKCARSNL. The segment at 219–319 is coil 1B; sequence EPLFDNYITN…YHEEIEMLQS (101 aa). Positions 320-336 are linker 12; that stretch reads HISETSVIVKMDNSRDL. Residues 337-480 form a coil 2 region; sequence NLDGIIAEVK…VTYRRLLEGE (144 aa). Residues 481–603 form a tail region; it reads EIRICEGVGP…STTTSRRTRY (123 aa). Residues 579 to 603 form a disordered region; it reads CSGGRGNRSSSVRFSSTTTSRRTRY.

It belongs to the intermediate filament family. In terms of assembly, heterotetramer of two type I and two type II keratins. In skin, only expressed in the suprabasal cells of tail scale epidermis. Suprabasally expressed in stratified squamous epithelia and also in the posterior unit of the complex filiform papillae of tongue. Expressed in rare anatomical sites in which an orthokeratinized stratum corneum would be too soft and a hard keratinized structure would be too rigid to meet the functional requirement of the respective epithelia.

This Mus musculus (Mouse) protein is Keratin, type II cuticular Hb4 (Krt84).